Reading from the N-terminus, the 461-residue chain is MSATPPIVPTATPKVGFVSLGCPKALVDSEQIITQLRAEGYEISGTYDGADLVVVNTCGFIDEAVQESLDAIGEALNENGKVIVTGCLGAKKSASGSGLIEEVHPKVLAVTGPHALGEVMQHVHTHLPKPHDPFVDLVPAAGVKLTPRHYAYLKISEGCNHRCTFCIIPSMRGDLVSRPVADVMLEAENLFKSGVKELLVISQDTSAYGVDVKYRTGFWNGKPIKTRMTDLVGALGELAAQYGAWVRLHYVYPYPSVDEVIPMMAEGPYKGHVLPYLDVPFQHAHPEVLKRMKRPANAEKVMERVKKWREMCPDLTIRSTFIAGFPGETEEQFQTLLDFIREAELDRVGCFAYSPVEGATANELDGALPDEVREERRARFMEVAEEVSAKRIAKKVGKTLKVLVDEINADGGIGRTAADAPEIDGVVYIAPAAKASKRYKVGDFVSVKITGADGHDLWGEV.

Residues 13 to 128 (PKVGFVSLGC…VMQHVHTHLP (116 aa)) form the MTTase N-terminal domain. Cys-22, Cys-58, Cys-87, Cys-159, Cys-163, and Cys-166 together coordinate [4Fe-4S] cluster. One can recognise a Radical SAM core domain in the interval 145 to 390 (LTPRHYAYLK…MEVAEEVSAK (246 aa)). The TRAM domain maps to 393–461 (AKKVGKTLKV…ADGHDLWGEV (69 aa)).

The protein belongs to the methylthiotransferase family. RimO subfamily. [4Fe-4S] cluster is required as a cofactor.

Its subcellular location is the cytoplasm. The catalysed reaction is L-aspartate(89)-[ribosomal protein uS12]-hydrogen + (sulfur carrier)-SH + AH2 + 2 S-adenosyl-L-methionine = 3-methylsulfanyl-L-aspartate(89)-[ribosomal protein uS12]-hydrogen + (sulfur carrier)-H + 5'-deoxyadenosine + L-methionine + A + S-adenosyl-L-homocysteine + 2 H(+). Catalyzes the methylthiolation of an aspartic acid residue of ribosomal protein uS12. This Paraburkholderia phytofirmans (strain DSM 17436 / LMG 22146 / PsJN) (Burkholderia phytofirmans) protein is Ribosomal protein uS12 methylthiotransferase RimO.